The sequence spans 493 residues: Angiopoietin-related protein 2 (493 aa).

Positions 1–19 are cleaved as a signal peptide; the sequence is MRPLCMTYWWLGLLATVGA. Coiled coils occupy residues 77-115 and 152-202; these read EVHL…VDGG and ALEL…QLEE. 2 N-linked (GlcNAc...) asparagine glycosylation sites follow: Asn-164 and Asn-192. Positions 269 to 489 constitute a Fibrinogen C-terminal domain; that stretch reads DKPSGPWRDC…KVVMMIRPNP (221 aa). Cystine bridges form between Cys-278/Cys-307 and Cys-430/Cys-443.

As to expression, widely expressed in heart, tongue, lung and skeletal muscle. Also found in lower levels in kidney, epididymis and testis.

It is found in the secreted. Induces sprouting in endothelial cells through an autocrine and paracrine action. In Mus musculus (Mouse), this protein is Angiopoietin-related protein 2 (Angptl2).